The primary structure comprises 194 residues: uncharacterized protein (194 aa).

The N-terminal stretch at 1-29 (MKKAFLVFLSVVLVTTVFLVKQQESVAQA) is a signal peptide. Positions 104-131 (KVDELLKKAGQIVEEKVEAAKEIAASKD) form a coiled coil. The helical transmembrane segment at 149–171 (YFYYVSYVAAAGALILIILAIDI) threads the bilayer.

It is found in the membrane. This is an uncharacterized protein from Bacillus subtilis (strain 168).